We begin with the raw amino-acid sequence, 1097 residues long: DNA-directed RNA polymerase subunit beta (1097 aa).

Residues 1073–1097 (DVNPRRSTPSRPTYESLGVADYDED) form a disordered region.

This sequence belongs to the RNA polymerase beta chain family. In terms of assembly, in cyanobacteria the RNAP catalytic core is composed of 2 alpha, 1 beta, 1 beta', 1 gamma and 1 omega subunit. When a sigma factor is associated with the core the holoenzyme is formed, which can initiate transcription.

The catalysed reaction is RNA(n) + a ribonucleoside 5'-triphosphate = RNA(n+1) + diphosphate. Its function is as follows. DNA-dependent RNA polymerase catalyzes the transcription of DNA into RNA using the four ribonucleoside triphosphates as substrates. The sequence is that of DNA-directed RNA polymerase subunit beta from Synechococcus sp. (strain RCC307).